The primary structure comprises 72 residues: Translation initiation factor IF-1 (72 aa).

One can recognise an S1-like domain in the interval 1-72 (MSKSDYIELE…TKGRIIFRHK (72 aa)).

The protein belongs to the IF-1 family. In terms of assembly, component of the 30S ribosomal translation pre-initiation complex which assembles on the 30S ribosome in the order IF-2 and IF-3, IF-1 and N-formylmethionyl-tRNA(fMet); mRNA recruitment can occur at any time during PIC assembly.

It is found in the cytoplasm. One of the essential components for the initiation of protein synthesis. Stabilizes the binding of IF-2 and IF-3 on the 30S subunit to which N-formylmethionyl-tRNA(fMet) subsequently binds. Helps modulate mRNA selection, yielding the 30S pre-initiation complex (PIC). Upon addition of the 50S ribosomal subunit IF-1, IF-2 and IF-3 are released leaving the mature 70S translation initiation complex. This chain is Translation initiation factor IF-1, found in Ruthia magnifica subsp. Calyptogena magnifica.